Here is a 112-residue protein sequence, read N- to C-terminus: Cortistatin (112 aa).

A signal peptide spans 1-27; it reads MGGCSTRGKRPSALSLLLLLLLSGIAA. The propeptide occupies 28 to 81; sequence SALPLESGPTGQDSVQDATGGRRTGLLTFLAWWHEWASQDSSSTAFEGGTPELS. The tract at residues 66-101 is disordered; the sequence is QDSSSTAFEGGTPELSKRQERPPLQQPPHRDKKPCK. Cysteine 100 and cysteine 111 are disulfide-bonded.

Belongs to the somatostatin family. As to expression, interneurons in the cerebral cortex and hippocampus.

The protein resides in the secreted. Neuropeptide with neuronal depressant and sleep-modulating properties. The protein is Cortistatin (Cort) of Rattus norvegicus (Rat).